The primary structure comprises 795 residues: Protein ROOT HAIR DEFECTIVE 3 homolog 1 (795 aa).

Topologically, residues 1-682 are cytoplasmic; it reads MDADKSEGCC…EANRRGNNWL (682 aa). One can recognise a GB1/RHD3-type G domain in the interval 39–254; the sequence is GLSYAVVSIM…IAPGGLAGDR (216 aa). 49 to 56 serves as a coordination point for GTP; it reads GPQSSGKS. Residues 218–244 are a coiled coil; it reads VALSSYEEKEEQFKEQIASLRQRFMHS. The helical transmembrane segment at 683–703 threads the bilayer; the sequence is PPPWAILALIVLGFNEFMTLL. At 704–706 the chain is on the lumenal side; it reads RNP. Residues 707–727 traverse the membrane as a helical segment; the sequence is LYLGVMFVAFLLAKALWTQLD. The Cytoplasmic portion of the chain corresponds to 728–795; it reads IPGEFRNGAL…PDHKSSSKED (68 aa). Residues 761 to 795 form a disordered region; that stretch reads QGEDPPAANPENRRSSNNTSSSENPPDHKSSSKED. Residues 775 to 784 are compositionally biased toward low complexity; the sequence is SSNNTSSSEN. The span at 785–795 shows a compositional bias: basic and acidic residues; the sequence is PPDHKSSSKED.

This sequence belongs to the TRAFAC class dynamin-like GTPase superfamily. GB1/RHD3 GTPase family. RHD3 subfamily. Specifically expressed in flowers.

Its subcellular location is the endoplasmic reticulum membrane. Functionally, probable GTP-binding protein that may be involved in cell development. The polypeptide is Protein ROOT HAIR DEFECTIVE 3 homolog 1 (Arabidopsis thaliana (Mouse-ear cress)).